A 170-amino-acid polypeptide reads, in one-letter code: UPF0690 protein C1orf52 homolog (170 aa).

Disordered regions lie at residues Met1–Leu56 and Ser124–Val170. A compositionally biased stretch (basic and acidic residues) spans Asp46–Leu56. Residues Glu144–Gln159 are compositionally biased toward acidic residues.

This sequence belongs to the UPF0690 family.

The polypeptide is UPF0690 protein C1orf52 homolog (Xenopus tropicalis (Western clawed frog)).